The sequence spans 191 residues: Cytochrome c biogenesis ATP-binding export protein CcmA (191 aa).

The region spanning 6 to 189 (LVATDIACRR…RVRTLAIRNF (184 aa)) is the ABC transporter domain. 38–45 (GANGIGKS) is a binding site for ATP.

This sequence belongs to the ABC transporter superfamily. CcmA exporter (TC 3.A.1.107) family. As to quaternary structure, the complex is composed of two ATP-binding proteins (CcmA) and two transmembrane proteins (CcmB).

The protein localises to the cell inner membrane. It carries out the reaction heme b(in) + ATP + H2O = heme b(out) + ADP + phosphate + H(+). Its function is as follows. Part of the ABC transporter complex CcmAB involved in the biogenesis of c-type cytochromes; once thought to export heme, this seems not to be the case, but its exact role is uncertain. Responsible for energy coupling to the transport system. This is Cytochrome c biogenesis ATP-binding export protein CcmA from Novosphingobium aromaticivorans (strain ATCC 700278 / DSM 12444 / CCUG 56034 / CIP 105152 / NBRC 16084 / F199).